The following is a 174-amino-acid chain: Dual-action ribosomal maturation protein DarP (174 aa).

This sequence belongs to the DarP family.

The protein resides in the cytoplasm. In terms of biological role, member of a network of 50S ribosomal subunit biogenesis factors which assembles along the 30S-50S interface, preventing incorrect 23S rRNA structures from forming. Promotes peptidyl transferase center (PTC) maturation. The polypeptide is Dual-action ribosomal maturation protein DarP (Pseudomonas aeruginosa (strain LESB58)).